The following is a 733-amino-acid chain: Phosphoribosylformylglycinamidine synthase subunit PurL (733 aa).

Histidine 41 is a catalytic residue. Tyrosine 44 and lysine 83 together coordinate ATP. Glutamate 85 contacts Mg(2+). Substrate contacts are provided by residues 86–89 (SHNH) and arginine 108. The Proton acceptor role is filled by histidine 87. Position 109 (aspartate 109) interacts with Mg(2+). Residues 212 to 232 (GASFASQELSEESEEKRPSVQ) are disordered. Residue glutamine 232 coordinates substrate. Aspartate 260 provides a ligand contact to Mg(2+). A substrate-binding site is contributed by 304–306 (ESQ). ATP is bound by residues aspartate 488 and glycine 525. Asparagine 526 provides a ligand contact to Mg(2+). Residue serine 528 participates in substrate binding.

The protein belongs to the FGAMS family. As to quaternary structure, monomer. Part of the FGAM synthase complex composed of 1 PurL, 1 PurQ and 2 PurS subunits.

Its subcellular location is the cytoplasm. The catalysed reaction is N(2)-formyl-N(1)-(5-phospho-beta-D-ribosyl)glycinamide + L-glutamine + ATP + H2O = 2-formamido-N(1)-(5-O-phospho-beta-D-ribosyl)acetamidine + L-glutamate + ADP + phosphate + H(+). The protein operates within purine metabolism; IMP biosynthesis via de novo pathway; 5-amino-1-(5-phospho-D-ribosyl)imidazole from N(2)-formyl-N(1)-(5-phospho-D-ribosyl)glycinamide: step 1/2. In terms of biological role, part of the phosphoribosylformylglycinamidine synthase complex involved in the purines biosynthetic pathway. Catalyzes the ATP-dependent conversion of formylglycinamide ribonucleotide (FGAR) and glutamine to yield formylglycinamidine ribonucleotide (FGAM) and glutamate. The FGAM synthase complex is composed of three subunits. PurQ produces an ammonia molecule by converting glutamine to glutamate. PurL transfers the ammonia molecule to FGAR to form FGAM in an ATP-dependent manner. PurS interacts with PurQ and PurL and is thought to assist in the transfer of the ammonia molecule from PurQ to PurL. This is Phosphoribosylformylglycinamidine synthase subunit PurL from Thermoanaerobacter sp. (strain X514).